Here is a 133-residue protein sequence, read N- to C-terminus: Small ribosomal subunit protein mS23 (133 aa).

This sequence belongs to the mitochondrion-specific ribosomal protein mS23 family. As to quaternary structure, component of the mitochondrial ribosome small subunit (28S) which comprises a 12S rRNA and about 30 distinct proteins.

It is found in the mitochondrion. The chain is Small ribosomal subunit protein mS23 (mrps-23) from Caenorhabditis elegans.